We begin with the raw amino-acid sequence, 518 residues long: Glutamate--cysteine ligase (518 aa).

It belongs to the glutamate--cysteine ligase type 1 family. Type 1 subfamily.

It catalyses the reaction L-cysteine + L-glutamate + ATP = gamma-L-glutamyl-L-cysteine + ADP + phosphate + H(+). It participates in sulfur metabolism; glutathione biosynthesis; glutathione from L-cysteine and L-glutamate: step 1/2. The sequence is that of Glutamate--cysteine ligase from Escherichia coli O157:H7.